We begin with the raw amino-acid sequence, 332 residues long: tRNA(Ile)-lysidine synthase (332 aa).

39–44 is an ATP binding site; that stretch reads SGGADS.

It belongs to the tRNA(Ile)-lysidine synthase family.

The protein resides in the cytoplasm. It carries out the reaction cytidine(34) in tRNA(Ile2) + L-lysine + ATP = lysidine(34) in tRNA(Ile2) + AMP + diphosphate + H(+). In terms of biological role, ligates lysine onto the cytidine present at position 34 of the AUA codon-specific tRNA(Ile) that contains the anticodon CAU, in an ATP-dependent manner. Cytidine is converted to lysidine, thus changing the amino acid specificity of the tRNA from methionine to isoleucine. This chain is tRNA(Ile)-lysidine synthase, found in Leifsonia xyli subsp. xyli (strain CTCB07).